Reading from the N-terminus, the 403-residue chain is RUN domain-containing protein 3B (403 aa).

The segment at 1–20 (MASRSLGGLSGSRGGGKKSL) is disordered. The residue at position 13 (Arg13) is an Omega-N-methylarginine. Residues 53 to 185 (DDSSPEFNNF…IDFSFCLKGE (133 aa)) enclose the RUN domain. Residues 207 to 232 (SDSISSDEEELRTFGSSDSEGSTPEN) form a disordered region. A phosphoserine mark is found at Ser211 and Ser212. A compositionally biased stretch (polar residues) spans 220 to 231 (FGSSDSEGSTPE). Residues 296-321 (AHKLEKEQLEYIIVELQDQLKSYQSL) are a coiled coil.

It belongs to the RUNDC3 family. Interacts with RAP2A.

The sequence is that of RUN domain-containing protein 3B (Rundc3b) from Rattus norvegicus (Rat).